A 209-amino-acid polypeptide reads, in one-letter code: tRNA (guanine-N(7)-)-methyltransferase (209 aa).

S-adenosyl-L-methionine-binding residues include Asp-35, Glu-60, Asn-87, and Asp-113. Asp-113 is a catalytic residue. Lys-117 and Asp-149 together coordinate substrate.

It belongs to the class I-like SAM-binding methyltransferase superfamily. TrmB family.

It catalyses the reaction guanosine(46) in tRNA + S-adenosyl-L-methionine = N(7)-methylguanosine(46) in tRNA + S-adenosyl-L-homocysteine. It functions in the pathway tRNA modification; N(7)-methylguanine-tRNA biosynthesis. Catalyzes the formation of N(7)-methylguanine at position 46 (m7G46) in tRNA. The chain is tRNA (guanine-N(7)-)-methyltransferase from Prochlorococcus marinus (strain AS9601).